A 721-amino-acid polypeptide reads, in one-letter code: Fatty acid oxidation complex subunit alpha (721 aa).

The enoyl-CoA hydratase/isomerase stretch occupies residues 1-190 (MIYEGKAITV…KVGAVDAVVA (190 aa)). Asp-297 contacts substrate. The 3-hydroxyacyl-CoA dehydrogenase stretch occupies residues 312-721 (KDVKQAAVLG…SFFGQASSEE (410 aa)). Residues Met-325, Asp-344, 401–403 (VVE), Lys-408, and Ser-430 each bind NAD(+). The active-site For 3-hydroxyacyl-CoA dehydrogenase activity is His-451. Asn-454 is a binding site for NAD(+). The substrate site is built by Asn-501 and Tyr-660.

This sequence in the N-terminal section; belongs to the enoyl-CoA hydratase/isomerase family. The protein in the C-terminal section; belongs to the 3-hydroxyacyl-CoA dehydrogenase family. As to quaternary structure, heterotetramer of two alpha chains (FadB) and two beta chains (FadA).

It catalyses the reaction a (3S)-3-hydroxyacyl-CoA + NAD(+) = a 3-oxoacyl-CoA + NADH + H(+). The enzyme catalyses a (3S)-3-hydroxyacyl-CoA = a (2E)-enoyl-CoA + H2O. It carries out the reaction a 4-saturated-(3S)-3-hydroxyacyl-CoA = a (3E)-enoyl-CoA + H2O. The catalysed reaction is (3S)-3-hydroxybutanoyl-CoA = (3R)-3-hydroxybutanoyl-CoA. It catalyses the reaction a (3Z)-enoyl-CoA = a 4-saturated (2E)-enoyl-CoA. The enzyme catalyses a (3E)-enoyl-CoA = a 4-saturated (2E)-enoyl-CoA. It participates in lipid metabolism; fatty acid beta-oxidation. Functionally, involved in the aerobic and anaerobic degradation of long-chain fatty acids via beta-oxidation cycle. Catalyzes the formation of 3-oxoacyl-CoA from enoyl-CoA via L-3-hydroxyacyl-CoA. It can also use D-3-hydroxyacyl-CoA and cis-3-enoyl-CoA as substrate. This chain is Fatty acid oxidation complex subunit alpha, found in Pseudomonas syringae pv. syringae (strain B728a).